We begin with the raw amino-acid sequence, 157 residues long: Transcription elongation factor GreA (157 aa).

Belongs to the GreA/GreB family.

In terms of biological role, necessary for efficient RNA polymerase transcription elongation past template-encoded arresting sites. The arresting sites in DNA have the property of trapping a certain fraction of elongating RNA polymerases that pass through, resulting in locked ternary complexes. Cleavage of the nascent transcript by cleavage factors such as GreA or GreB allows the resumption of elongation from the new 3'terminus. GreA releases sequences of 2 to 3 nucleotides. The sequence is that of Transcription elongation factor GreA from Bartonella henselae (strain ATCC 49882 / DSM 28221 / CCUG 30454 / Houston 1) (Rochalimaea henselae).